Here is a 216-residue protein sequence, read N- to C-terminus: Probable nicotinate-nucleotide adenylyltransferase (216 aa).

It belongs to the NadD family.

It catalyses the reaction nicotinate beta-D-ribonucleotide + ATP + H(+) = deamido-NAD(+) + diphosphate. It functions in the pathway cofactor biosynthesis; NAD(+) biosynthesis; deamido-NAD(+) from nicotinate D-ribonucleotide: step 1/1. In terms of biological role, catalyzes the reversible adenylation of nicotinate mononucleotide (NaMN) to nicotinic acid adenine dinucleotide (NaAD). This Desulfatibacillum aliphaticivorans protein is Probable nicotinate-nucleotide adenylyltransferase.